The chain runs to 4857 residues: Dual E2 ubiquitin-conjugating enzyme/E3 ubiquitin-protein ligase BIRC6 (4857 aa).

WD repeat units lie at residues Asp-68–Ala-106 and Leu-107–Cys-136. Residues Pro-268–Ala-377 form a BIR repeat. Cys-328, Cys-331, His-348, and Cys-355 together coordinate Zn(2+). The WD 3 repeat unit spans residues Phe-379–Ile-426. Disordered regions lie at residues Asp-465–Lys-498 and Ala-579–Leu-618. Residues Asp-472–Ser-482 show a composition bias toward acidic residues. 5 positions are modified to phosphoserine: Ser-473, Ser-480, Ser-482, Ser-581, and Ser-590. 4 WD repeats span residues Met-501–Leu-720, Asn-730–Lys-850, Asp-851–Glu-927, and Pro-928–Ile-966. The segment covering Ala-579–His-588 has biased composition (polar residues). A compositionally biased stretch (polar residues) spans Ser-595–Leu-618. Disordered stretches follow at residues Leu-984 to Pro-1004 and Gln-1053 to His-1073. A compositionally biased stretch (polar residues) spans Ser-992–Pro-1004. Positions Arg-1056–Gln-1065 are enriched in basic residues. At Thr-1710 the chain carries Phosphothreonine. Phosphoserine is present on residues Ser-2222 and Ser-2955. The interval Ser-2945–Val-2973 is disordered. The tract at residues His-3189–Arg-3193 is HRRAR loop; important for DIABLO/SMAC and HTRA2 binding. The 250-residue stretch at Asp-3819–Gln-4068 folds into the Ubiquitin-like domain. The interval Gln-3923–Ser-3949 is disordered. Thr-3931 bears the Phosphothreonine mark. Ser-4023 bears the Phosphoserine mark. Residues Arg-4260–Glu-4283 form a disordered region. Polar residues predominate over residues Val-4261–Glu-4283. One can recognise a UBC core domain in the interval Ala-4573 to Met-4740. Cys-4666 functions as the Glycyl thioester intermediate in the catalytic mechanism. Residues Glu-4835–Leu-4857 form a disordered region. Residues Lys-4844–Leu-4857 show a composition bias toward polar residues.

It belongs to the BIRC6 family. As to quaternary structure, homodimer; antiparallel. Interacts with RNF41. Interacts with DIABLO/SMAC, likely with higher affinity to SMAC dimer than SMAC monomer; this interaction blocks the substrate-binding site and inhibits the caspase inhibition activity of BIRC6. Interacts with KIF23/MKLP1, USP8/UBPY, BIRC5/survivin, MAP2K1/MEK1, RAB8A/RAB8, RAB11A/RAB11, PLK1, EXOC3/SEC6 and EXOC4/SEC8. Post-translationally, ubiquitinated; mediated by RNF41 E3 ligase and leads to proteasomal degradation, impairing inhibition of apoptosis. Deubiquitinated by USP8/UBPY. Autoubiquitinated; mediated by E1 ubiquitin activating enzyme UBA6. Proteolytically cleaved. Acts as substrate for CASP3, CASP6, CASP7, CASP9 and HTRA2. As to expression, expressed in brain cancer cells.

The protein resides in the golgi apparatus. Its subcellular location is the trans-Golgi network membrane. It localises to the endosome. It is found in the cytoplasm. The protein localises to the cytoskeleton. The protein resides in the spindle pole. Its subcellular location is the microtubule organizing center. It localises to the centrosome. It is found in the midbody. The protein localises to the midbody ring. It catalyses the reaction S-ubiquitinyl-[E1 ubiquitin-activating enzyme]-L-cysteine + [acceptor protein]-L-lysine = [E1 ubiquitin-activating enzyme]-L-cysteine + N(6)-monoubiquitinyl-[acceptor protein]-L-lysine.. Inhibited by DIABLO/SMAC, which competes for the substrate-binding sites on BIRC6. BIRC6 inhibits caspases and protease by ubiquitination but BIRC6 itself is subjected to protease cleavage by CASP3, CASP6, CASP7, CASP9 and HTRA2 by protease cleavage. Its function is as follows. Anti-apoptotic protein known as inhibitor of apoptosis (IAP) which can regulate cell death by controlling caspases and by acting as an E3 ubiquitin-protein ligase. Unlike most IAPs, does not contain a RING domain and it is not a RING-type E3 ligase. Instead acts as a dual E2/E3 enzyme that combines ubiquitin conjugating (E2) and ubiquitin ligase (E3) activities in a single polypeptide. Ubiquitination is mediated by a non-canonical E1 ubiquitin activating enzyme UBA6. Ubiquitinates CASP3, CASP7 and CASP9 and inhibits their caspase activity; also ubiquitinates their procaspases but to a weaker extent. Ubiquitinates pro-apoptotic factors DIABLO/SMAC and HTRA2. DIABLO/SMAC antagonizes the caspase inhibition activity of BIRC6 by competing for the same binding sites as the caspases. Ubiquitinates the autophagy protein MAP1LC3B; this activity is also inhibited by DIABLO/SMAC. Important regulator for the final stages of cytokinesis. Crucial for normal vesicle targeting to the site of abscission, but also for the integrity of the midbody and the midbody ring, and its striking ubiquitin modification. This chain is Dual E2 ubiquitin-conjugating enzyme/E3 ubiquitin-protein ligase BIRC6 (BIRC6), found in Homo sapiens (Human).